A 226-amino-acid polypeptide reads, in one-letter code: V-type proton ATPase subunit E 2 (226 aa).

This sequence belongs to the V-ATPase E subunit family. V-ATPase is a heteromultimeric enzyme made up of two complexes: the ATP-hydrolytic V1 complex and the proton translocation V0 complex. The V1 complex consists of three catalytic AB heterodimers that form a heterohexamer, three peripheral stalks each consisting of EG heterodimers, one central rotor including subunits D and F, and the regulatory subunits C and H. The proton translocation complex V0 consists of the proton transport subunit a, a ring of proteolipid subunits c9c'', rotary subunit d, subunits e and f, and the accessory subunits ATP6AP1/Ac45 and ATP6AP2/PRR.

In terms of biological role, subunit of the V1 complex of vacuolar(H+)-ATPase (V-ATPase), a multisubunit enzyme composed of a peripheral complex (V1) that hydrolyzes ATP and a membrane integral complex (V0) that translocates protons. V-ATPase is responsible for acidifying and maintaining the pH of intracellular compartments and in some cell types, is targeted to the plasma membrane, where it is responsible for acidifying the extracellular environment. This is V-type proton ATPase subunit E 2 (ATP6V1E2) from Bos taurus (Bovine).